Consider the following 761-residue polypeptide: MATSSSSSSSLLLPNINFNSRQSPTITRSVSIAGIFLPRNRLSYNHNLRIRTRLIRASKDDNVAVEDRDNAVKINGDYNGSARLNGNGSARKSVNGDFNGSARLNGNGSLVKYVNGSVTVETEEVTKKRKEEVRKKRVEDIGQEDAWFKNNTQQKQVEVSVTPGGRWNRFKTYSTIQRTLEIWGFVVQFIFRTWLSNKKFSYKGGMTEEKKVLRRKVLAKWLKENILRLGPTFIKIGQQFSTRVDILPQEYVDQLSELQDQVPPFPSATALSIVEEELGGSVEDIFDRFDYEPIAAASLGQVHRARLKGQEVVLKVQRPGLKDLFDIDLKNLRVIAEYLQKVDPKSDGAKRDWVAIYDECASVLYQEIDYTKEAANSELFANNFKDLEYVKVPSIYWEYTTPQVLTMEYVPGIKINKIQALDQLGVDRKRLGRYAVESYLEQILSHGFFHADPHPGNIAVDDVNGGRLIFYDFGMMGSISPNIREGLLEAFYGVYEKDPDKVLQAMVQMGVLVPTGDLTAVRRTALFFLNSFEERLAAQRKEKEEIAAAEELGFKKPLSKEEKQEKKKQRLAAIGEDLLAIAADQPFRFPATFTFVVRAFSVLDGIGKGLDPRFDITEIAKPYALELLRFREAGVEVVVKDLRKRWDRQSQAFYNLFRQADRVEKLAVVIERLEQGDLKLRVRALESERAFQRVAAVQKTVGSAVAAGSLVNLATILYLNSIKTPATIAYTVCAFFSLQVLIGIIKVKKFDQREKLITGTA.

The N-terminal 57 residues, 1 to 57 (MATSSSSSSSLLLPNINFNSRQSPTITRSVSIAGIFLPRNRLSYNHNLRIRTRLIRA), are a transit peptide targeting the chloroplast. Residues 288–648 (RFDYEPIAAA…VKDLRKRWDR (361 aa)) enclose the Protein kinase domain. ATP-binding positions include 294-302 (IAAASLGQV) and lysine 315. Aspartate 452 acts as the Proton acceptor in catalysis. The helical transmembrane segment at 725 to 745 (PATIAYTVCAFFSLQVLIGII) threads the bilayer.

It belongs to the protein kinase superfamily. ADCK protein kinase family. As to expression, mostly expressed in leaves and flowers, and, to a lower extent, in stems, siliques and roots.

It localises to the plastid. The protein resides in the chloroplast envelope. It is found in the chloroplast membrane. It catalyses the reaction L-seryl-[protein] + ATP = O-phospho-L-seryl-[protein] + ADP + H(+). It carries out the reaction L-threonyl-[protein] + ATP = O-phospho-L-threonyl-[protein] + ADP + H(+). In terms of biological role, involved in resistance to oxidative stress (e.g. hydrogen peroxide H(2)O(2)), high light and heavy metals (e.g. cadmium ions Cd(2+)). Influences responses to reactive oxygen species (ROS) production. Together with SIA1, regulates iron distribution within the chloroplast and mediates the oxidative stress response. Together with ABC1K7, influences chloroplast lipid synthesis/accumulation and modulates chloroplast membrane composition in response to stress. This Arabidopsis thaliana (Mouse-ear cress) protein is Protein ACTIVITY OF BC1 COMPLEX KINASE 8, chloroplastic.